A 612-amino-acid polypeptide reads, in one-letter code: Isocitrate dehydrogenase kinase/phosphatase (612 aa).

ATP-binding positions include 327-333 and Lys348; that span reads APGIKGL. Residue Asp383 is part of the active site. Residues 593–612 are disordered; that stretch reads AGAASNEQDAPDAGRSVRAA.

The protein belongs to the AceK family.

It is found in the cytoplasm. It catalyses the reaction L-seryl-[isocitrate dehydrogenase] + ATP = O-phospho-L-seryl-[isocitrate dehydrogenase] + ADP + H(+). In terms of biological role, bifunctional enzyme which can phosphorylate or dephosphorylate isocitrate dehydrogenase (IDH) on a specific serine residue. This is a regulatory mechanism which enables bacteria to bypass the Krebs cycle via the glyoxylate shunt in response to the source of carbon. When bacteria are grown on glucose, IDH is fully active and unphosphorylated, but when grown on acetate or ethanol, the activity of IDH declines drastically concomitant with its phosphorylation. The protein is Isocitrate dehydrogenase kinase/phosphatase of Paraburkholderia xenovorans (strain LB400).